The chain runs to 317 residues: Melanocyte-stimulating hormone receptor (317 aa).

Over 1–37 (MPAQGSQRSLLGSLNSTLMATSSLGLSANQSGPQCLE) the chain is Extracellular. 2 N-linked (GlcNAc...) asparagine glycosylation sites follow: Asn-15 and Asn-29. The helical transmembrane segment at 38–63 (VSVPDGLFLCLGLVSLVENMLVVAAI) threads the bilayer. At 64-72 (AKNRNLHSP) the chain is on the cytoplasmic side. The helical transmembrane segment at 73 to 93 (MYCFICCLALSDLLVSVSNVL) threads the bilayer. Over 94–118 (ETAVMLLLEAGALAAQATVVQQLDN) the chain is Extracellular. Residues 119–140 (IIDVLVCSSMVSSLCFLGAIAM) traverse the membrane as a helical segment. The Cytoplasmic segment spans residues 141–163 (DRYISIFYALRYHSIVTLSRAQW). The helical transmembrane segment at 164 to 183 (ATAAVWAAGILSSTLFIAYY) threads the bilayer. The Extracellular segment spans residues 184–191 (DHTAVLLC). Residues 192–211 (LVVFFLAMLVLMAVLYAHML) form a helical membrane-spanning segment. The Cytoplasmic portion of the chain corresponds to 212–240 (TQACQHVQGITRLHKRQHLVQQGFGLKGA). A helical membrane pass occupies residues 241 to 266 (ATLTILLGVFLLCWGPFFLHLTLIAV). At 267–279 (CPQHPTCSCVFKN) the chain is on the extracellular side. The chain crosses the membrane as a helical span at residues 280–300 (FKLFLALIICNAIVDPLIYAF). Residues 301-317 (RXQELRKTLKEVLLFSW) lie on the Cytoplasmic side of the membrane.

The protein belongs to the G-protein coupled receptor 1 family. As to quaternary structure, interacts with MGRN1, but does not undergo MGRN1-mediated ubiquitination; this interaction competes with GNAS-binding and thus inhibits agonist-induced cAMP production. Interacts with OPN3; the interaction results in a decrease in MC1R-mediated cAMP signaling and ultimately a decrease in melanin production in melanocytes.

It localises to the cell membrane. Functionally, receptor for MSH (alpha, beta and gamma) and ACTH. The activity of this receptor is mediated by G proteins which activate adenylate cyclase. Mediates melanogenesis, the production of eumelanin (black/brown) and phaeomelanin (red/yellow), via regulation of cAMP signaling in melanocytes. This Loris tardigradus (Slender loris) protein is Melanocyte-stimulating hormone receptor (MC1R).